The chain runs to 630 residues: 1-deoxy-D-xylulose-5-phosphate synthase (630 aa).

Thiamine diphosphate is bound by residues His74 and 115–117; that span reads GHA. Residue Asp146 coordinates Mg(2+). Thiamine diphosphate is bound by residues 147–148, Asn175, Phe284, and Glu364; that span reads AA. Asn175 contacts Mg(2+).

Belongs to the transketolase family. DXPS subfamily. In terms of assembly, homodimer. It depends on Mg(2+) as a cofactor. Thiamine diphosphate serves as cofactor.

The catalysed reaction is D-glyceraldehyde 3-phosphate + pyruvate + H(+) = 1-deoxy-D-xylulose 5-phosphate + CO2. It functions in the pathway metabolic intermediate biosynthesis; 1-deoxy-D-xylulose 5-phosphate biosynthesis; 1-deoxy-D-xylulose 5-phosphate from D-glyceraldehyde 3-phosphate and pyruvate: step 1/1. In terms of biological role, catalyzes the acyloin condensation reaction between C atoms 2 and 3 of pyruvate and glyceraldehyde 3-phosphate to yield 1-deoxy-D-xylulose-5-phosphate (DXP). The polypeptide is 1-deoxy-D-xylulose-5-phosphate synthase (Methylacidiphilum infernorum (isolate V4) (Methylokorus infernorum (strain V4))).